A 62-amino-acid chain; its full sequence is Delta-theraphotoxin-Cg1a 1 (62 aa).

The signal sequence occupies residues 1-21 (MKTSILFVIFSLALLFALSAA). The propeptide occupies 22-29 (TEIEETDR). 3 cysteine pairs are disulfide-bonded: C31/C46, C38/C51, and C45/C58.

The protein belongs to the neurotoxin 10 (Hwtx-1) family. 33 (Jztx-1) subfamily. As to expression, expressed by the venom gland.

Its subcellular location is the secreted. Functionally, inhibits voltage-gated sodium channels, preferentially subtype Nav1.5/SCN5A (in cardiac myocytes), but also Nav1.6/SCN8A and Nav1.7/SCN9A (TTX-sensitive Nav in rat DRG neurons) and invertebrate Nav (in insect neurons) as well as voltage-gated potassium channels of the subtype Kv2.1/KCNB1. Is suggested to bind to site 3 of the sodium channels and inhibit the inactivation of the activated channels, thereby blocking neuronal transmission. On potassium channels, inhibits activation of channels with an IC(50) of 8.05 uM through a voltage sensor-trapping mechanism. Increases muscle contraction in several assays (mouse phrenic nerve-diaphragm, toad heart, rat vas deferens) and is suggested to act both presynaptically and postsynaptically. Its function is as follows. Moderately inhibits voltage-gated sodium channels and weakly inhibits voltage-gated potassium channel. Inhibits the inactivation of rat Nav1.2/SCN2A (IC(50)=870 nM), rat Nav1.3/SCN3A (IC(50)=845 nM), rat Nav1.4/SCN4A (IC(50)=339 nM), human Nav1.5/SCN5A (IC(50)=335 nM) and human Nav1.7/SCN9A sodium channels (IC(50)=348 nM). The toxin delays the inactivation of sodium channels without affecting the activation and steady-state inactivation kinetics in the physiological range of voltages. Site-directed mutagenesis of the sodium channel indicates that the toxin interacts with site 3 located at the extracellular S3-S4 linker of domain IV. On potassium channels, it inhibits activation of channels with an IC(50) of 8.05 uM through a voltage sensor-trapping mechanism. It increases muscle contraction in several assays (mouse phrenic nerve-diaphragm, toad heart, rat vas deferens) and is suggested to act both presynaptically and postsynaptically. The polypeptide is Delta-theraphotoxin-Cg1a 1 (Chilobrachys guangxiensis (Chinese earth tiger tarantula)).